Here is a 532-residue protein sequence, read N- to C-terminus: D-arabinono-1,4-lactone oxidase (532 aa).

Positions 25–199 constitute an FAD-binding PCMH-type domain; the sequence is YSARPRLYFQ…VRATIRVVPA (175 aa). H62 is subject to Pros-8alpha-FAD histidine.

The protein belongs to the oxygen-dependent FAD-linked oxidoreductase family. FAD serves as cofactor.

It is found in the mitochondrion membrane. The catalysed reaction is D-arabinono-1,4-lactone + O2 = dehydro-D-arabinono-1,4-lactone + H2O2 + H(+). It participates in cofactor biosynthesis; D-erythroascorbate biosynthesis; dehydro-D-arabinono-1,4-lactone from D-arabinose: step 2/2. This Eremothecium gossypii (strain ATCC 10895 / CBS 109.51 / FGSC 9923 / NRRL Y-1056) (Yeast) protein is D-arabinono-1,4-lactone oxidase (ALO1).